The primary structure comprises 1501 residues: EF-hand calcium-binding domain-containing protein 6 (1501 aa).

A disordered region spans residues 18 to 47 (RKFTHSRPHSSPCRVYSRNGSPNKFRSSST). A compositionally biased stretch (polar residues) spans 35-47 (RNGSPNKFRSSST). EF-hand domains are found at residues 70-105 (DRGDELQKAFQLLDTGQNLTVSKSELRRIITDFLMP), 172-207 (KNIKTVMKAFELIDVNKTGLVRPQELRRVLETFCMK), 297-332 (KSYEKVEKALSAGDPCKGGYVSFNYLKIVLDTFVYQ), 403-438 (DHSASLKKALLIINTKPDGPITREEFRYILNCMAVK), 439-474 (LSDSEFKELMQMLDPGDTGVVNTSMFIDLIEENCRM), 504-539 (RNLQAFYNMLRSYDLGDTGRIGRNNFKKIMHVFCPF), and 634-669 (QQDPAFKKRFLDFSKEPNGKINVHDFKKVLEDTGMP). The interval 699-718 (EDPPMRGPETTPPQPPTPSK) is disordered. 7 consecutive EF-hand domains span residues 741 to 776 (ESFRDPYSAFFKTDADRDGIINMHDLHRLLLHLLLN), 847 to 882 (NRWSDLSKNFLETDNEGNGILRRRDIKNALYGFDIP), 883 to 918 (LTPREFEKLWARYDTEGKGHITYQEFLQKLGINYSP), 964 to 999 (DRHQDISKAFTKTDQSKTNYISICKMQEVLEECGCS), 1069 to 1104 (SSQLALSTAFSALDKEDTGFVKATEFGQVLKDFCYK), 1176 to 1211 (SHYHAITQEFENFDTMKTNTISREEFRAICNRRVQI), and 1212 to 1247 (LTDEQFDRLWNEMPVNAKGRLKYPDFLSRFSSETAA). D754, D756, D758, and D765 together coordinate Ca(2+). T884 is subject to Phosphothreonine. Positions 1246–1307 (AATPMATGDS…TTVIPGTPPL (62 aa)) are disordered. Polar residues-rich tracts occupy residues 1270–1279 (GTRSALSLPT) and 1286–1301 (SKSQSHPCTPASTTVI). S1290 carries the post-translational modification Phosphoserine. Phosphothreonine is present on residues T1294 and T1304. The interval 1303–1501 (GTPPLQNCDP…YNDFLRAFLQ (199 aa)) is interaction with PARK7. EF-hand domains lie at 1359–1394 (ISKEECQQLIIKYDLKSNGKFAYCDFIQSCVLLLKA), 1434–1469 (HCWRPMRRTFKSYDEAGTGLLSVADFRTVLRQYSIN), and 1470–1501 (LSEEEFFHILEYYDKTLSSKISYNDFLRAFLQ). The interaction with AR stretch occupies residues 1407–1501 (NAHKMKEAGA…YNDFLRAFLQ (95 aa)).

As to quaternary structure, microtubule inner protein component of sperm flagellar doublet microtubules. Binds PARK7. Part of a ternary complex containing PARK7, EFCAB6/DJBP and AR. As to expression, specifically expressed in the testis.

Its subcellular location is the nucleus. The protein resides in the cytoplasm. It localises to the cytoskeleton. The protein localises to the flagellum axoneme. In terms of biological role, negatively regulates the androgen receptor by recruiting histone deacetylase complex, and protein DJ-1 antagonizes this inhibition by abrogation of this complex. Microtubule inner protein (MIP) part of the dynein-decorated doublet microtubules (DMTs) in cilia axoneme, which is required for motile cilia beating. In Homo sapiens (Human), this protein is EF-hand calcium-binding domain-containing protein 6.